The following is a 145-amino-acid chain: Maximins 5/H4 type 1 (145 aa).

Positions 1–18 (MNFKYIVAVSFLIASAYA) are cleaved as a signal peptide. Propeptides lie at residues 19–43 (RSVQ…REIR) and 74–124 (TAEE…KEKR). The residue at position 144 (leucine 144) is a Leucine amide.

It belongs to the bombinin family. As to expression, expressed by the skin glands.

The protein resides in the secreted. In terms of biological role, maximin-5 shows antibacterial activity against both Gram-positive and Gram-negative bacteria. The only exception is the resistance of E.coli. Also shows antimicrobial activity against fungi C.albicans, A.flavus and P.uticale. It has little hemolytic activity. It does not possess a significant cytotoxicity against tumor cell lines. It does not possess a significant anti-HIV activity. Its function is as follows. Maximin-H4 shows antibacterial activity against both Gram-positive and Gram-negative bacteria. It also shows antimicrobial activity against the fungus C.albicans. Shows strong hemolytic activity. In Bombina maxima (Giant fire-bellied toad), this protein is Maximins 5/H4 type 1.